The chain runs to 166 residues: Myosin regulatory light chain 2, ventricular/cardiac muscle isoform (166 aa).

Ser-2 is subject to N,N,N-trimethylserine. A Deamidated asparagine modification is found at Asn-14. Residue Ser-19 is modified to Phosphoserine. EF-hand domains are found at residues 24–59, 94–129, and 130–165; these read TQIQ…LGRV, DPEE…QAER, and FSKE…GEEK. The Ca(2+) site is built by Asp-37, Asn-39, Asp-41, and Asp-48. Phosphothreonine is present on Thr-52.

In terms of assembly, myosin is a hexamer of 2 heavy chains and 4 light chains. Interacts with MYOC. Post-translationally, N-terminus is methylated by METTL11A/NTM1. Phosphorylated by MYLK3 and MYLK2; promotes cardiac muscle contraction and function. Dephosphorylated by PPP1CB complexed to PPP1R12B. The phosphorylated form in adult is expressed as gradients across the heart from endocardium (low phosphorylation) to epicardium (high phosphorylation); regulates cardiac torsion and workload distribution.

The protein resides in the cytoplasm. It localises to the myofibril. The protein localises to the sarcomere. Its subcellular location is the a band. Functionally, contractile protein that plays a role in heart development and function. Following phosphorylation, plays a role in cross-bridge cycling kinetics and cardiac muscle contraction by increasing myosin lever arm stiffness and promoting myosin head diffusion; as a consequence of the increase in maximum contraction force and calcium sensitivity of contraction force. These events altogether slow down myosin kinetics and prolong duty cycle resulting in accumulated myosins being cooperatively recruited to actin binding sites to sustain thin filament activation as a means to fine-tune myofilament calcium sensitivity to force. During cardiogenesis plays an early role in cardiac contractility by promoting cardiac myofibril assembly. The polypeptide is Myosin regulatory light chain 2, ventricular/cardiac muscle isoform (Bos taurus (Bovine)).